A 638-amino-acid chain; its full sequence is Octopamine receptor 1 (638 aa).

The Extracellular portion of the chain corresponds to 1 to 28; sequence MSRDIFMKRLRLHLLFDEVAMVTHIVGD. A helical transmembrane segment spans residues 29–53; sequence VLSSVLLCAVVLLVLVGNTLVVAAV. Topologically, residues 54-64 are cytoplasmic; the sequence is ATSRKLRTVTN. Residues 65–87 traverse the membrane as a helical segment; it reads VFIVNLACADLLLGVLVLPFSAV. Topologically, residues 88–102 are extracellular; the sequence is NEIKDVWIFGHVWCQ. A disulfide bond links C101 and C230. The chain crosses the membrane as a helical span at residues 103–124; that stretch reads VWLAVDVWLCTASILNLCCISL. The Cytoplasmic segment spans residues 125-147; the sequence is DRYLAITRPIRYPGLMSAKRAKT. The chain crosses the membrane as a helical span at residues 148–167; the sequence is LVAGVWLFSFVICCPPLIGW. Topologically, residues 168–239 are extracellular; the sequence is NDGGDGIMDY…CELTNSRGYR (72 aa). N-linked (GlcNAc...) asparagine glycans are attached at residues N178, N207, and N215. The chain crosses the membrane as a helical span at residues 240–259; the sequence is IYAALGSFFIPMLVMVFFYL. The Cytoplasmic portion of the chain corresponds to 260–520; that stretch reads QIYRAAVKTI…FNREKKAAKT (261 aa). The chain crosses the membrane as a helical span at residues 521–545; the sequence is LAIIVGAFIMCWMPFFTIYLVGAFC. Over 546–551 the chain is Extracellular; it reads ENCISP. A helical membrane pass occupies residues 552 to 575; it reads IVFSVAFWLGYCNSAMNPCVYALF. Residues 576-638 lie on the Cytoplasmic side of the membrane; that stretch reads SRDFRFAFRK…TASGGNGGYT (63 aa). The disordered stretch occupies residues 618–638; that stretch reads DDAKSSSDIGPTASGGNGGYT.

This sequence belongs to the G-protein coupled receptor 1 family. As to expression, expressed in the central nervous system.

The protein localises to the cell membrane. Its function is as follows. G-protein coupled receptor for octopamine (OA), which is a neurotransmitter, neurohormone, and neuromodulator in invertebrates. Activation of this receptor by octopamine induces an increase in both inositol phosphates and cyclic AMP. The coupling to adenylyl cyclase seems to be less efficient than the coupling to phospholipase C. The rank order of potency for agonists is p-synephrine &gt;= clonidine &gt; p-octopamine = xylometazoline = phenylephrine = oxymetazoline &gt; B-HT920 &gt; serotonin = p-tyramine &gt; epinephrine &gt; norepinephrine &gt; methoxamine = dopamine = histamine. For antagonists, the rank order is yohimbine &gt; chlopromazine / spiperone &gt; phentolamine &gt; mianserine &gt; rauwolscine &gt; prazosin &gt; alprenolol / propanolol &gt; pindolol. In Lymnaea stagnalis (Great pond snail), this protein is Octopamine receptor 1.